A 436-amino-acid polypeptide reads, in one-letter code: Xylose isomerase (436 aa).

Active-site residues include His100 and Asp103. 7 residues coordinate Mg(2+): Glu231, Glu267, His270, Asp295, Asp306, Asp308, and Asp338.

This sequence belongs to the xylose isomerase family. As to quaternary structure, homotetramer. The cofactor is Mg(2+).

Its subcellular location is the cytoplasm. It catalyses the reaction alpha-D-xylose = alpha-D-xylulofuranose. This Rhizobium etli (strain CIAT 652) protein is Xylose isomerase.